We begin with the raw amino-acid sequence, 224 residues long: Uracil-DNA glycosylase (224 aa).

The active-site Proton acceptor is the D61.

It belongs to the uracil-DNA glycosylase (UDG) superfamily. UNG family.

It is found in the cytoplasm. The enzyme catalyses Hydrolyzes single-stranded DNA or mismatched double-stranded DNA and polynucleotides, releasing free uracil.. Excises uracil residues from the DNA which can arise as a result of misincorporation of dUMP residues by DNA polymerase or due to deamination of cytosine. The protein is Uracil-DNA glycosylase of Mannheimia succiniciproducens (strain KCTC 0769BP / MBEL55E).